Consider the following 529-residue polypeptide: DEP domain-containing protein 1B (529 aa).

The 85-residue stretch at 24–108 folds into the DEP domain; it reads FRAGMPLRKH…DDGHLYRFPP (85 aa). The region spanning 192 to 393 is the Rho-GAP domain; the sequence is ARLQKVLGLD…FLMDNYQEIL (202 aa).

The sequence is that of DEP domain-containing protein 1B (DEPDC1B) from Gallus gallus (Chicken).